A 979-amino-acid polypeptide reads, in one-letter code: Probable serine/threonine-protein kinase iksA (979 aa).

N-linked (GlcNAc...) asparagine glycosylation is found at N32, N110, N120, N121, N147, N155, N161, N220, N231, and N243. Residues 207-245 are disordered; that stretch reads SKSGVNNNNNNNNNDSTTTNNNNNNNTTPPQQQQQQNSS. Over residues 212–244 the composition is skewed to low complexity; the sequence is NNNNNNNNNDSTTTNNNNNNNTTPPQQQQQQNS. Residues 261–568 enclose the Protein kinase domain; it reads FKEDIKIGSG…ISQILSTHFI (308 aa). Residues 267–275 and K293 contribute to the ATP site; that span reads IGSGGFGSV. D397 (proton acceptor) is an active-site residue. 7 N-linked (GlcNAc...) asparagine glycosylation sites follow: N592, N597, N615, N645, N646, N663, and N699. Residues 593-602 are compositionally biased toward polar residues; sequence TSVHNTTAST. Positions 593–666 are disordered; sequence TSVHNTTAST…LGNNNNNNTN (74 aa). The span at 610–666 shows a compositional bias: low complexity; the sequence is SISTTNSTTSSSSSTATSSSLSSTTIATTSSSNAINNTTATTTTNSNLGNNNNNNTN. Positions 713 to 727 are enriched in acidic residues; sequence NDDIIIDDDDDDDDS. The tract at residues 713–793 is disordered; the sequence is NDDIIIDDDD…GNNGIRKALP (81 aa). 2 stretches are compositionally biased toward low complexity: residues 728 to 737 and 753 to 773; these read TNNNDTNNTD and NNKKSSYSRSSSIRSPSSSNK. N-linked (GlcNAc...) asparagine glycans are attached at residues N731 and N734. Residues 846–866 form a helical membrane-spanning segment; sequence FPSPILLYPLLLLSLIPILVV. N870 and N894 each carry an N-linked (GlcNAc...) asparagine glycan. 2 helical membrane passes run 912–932 and 956–976; these read INTIISIIRFIYYFVISVLLP and FPLLSLFKNLTLLIINLIFIF.

This sequence belongs to the protein kinase superfamily. Ser/Thr protein kinase family.

It localises to the membrane. It catalyses the reaction L-seryl-[protein] + ATP = O-phospho-L-seryl-[protein] + ADP + H(+). The enzyme catalyses L-threonyl-[protein] + ATP = O-phospho-L-threonyl-[protein] + ADP + H(+). The protein is Probable serine/threonine-protein kinase iksA (iksA) of Dictyostelium discoideum (Social amoeba).